Here is a 284-residue protein sequence, read N- to C-terminus: Homeobox protein SIX1 (284 aa).

Positions 124 to 183 (GEETSYCFKEKSRGVLREWYAHNPYPSPREKRELAEATGLTTTQVSNWFKNRRQRDRAAE) form a DNA-binding region, homeobox. Residues 168–284 (VSNWFKNRRQ…LTSSLVDLGS (117 aa)) form a disordered region. Residues 179–190 (DRAAEAKERENT) show a composition bias toward basic and acidic residues. Residues 227–284 (DQNSVLLLQSNMGHARSSNYSLPGLTASQPSHGLQAHQHQLQDSLLGPLTSSLVDLGS) show a composition bias toward polar residues.

Belongs to the SIX/Sine oculis homeobox family. As to quaternary structure, interacts with DACH1. Interacts with EYA1. Interacts with EYA2. Interacts with CDH1. Interacts with TBX18. Interacts with CEBPA. Interacts with CEBPB. Interacts with EBF2. Post-translationally, phosphorylated during interphase; becomes hyperphosphorylated during mitosis. Hyperphosphorylation impairs binding to promoter elements. In terms of processing, ubiquitinated by the anaphase promoting complex (APC), leading to its proteasomal degradation. In terms of tissue distribution, expressed in phalangeal tendons and in skeletal muscle and in head and body mesenchyme.

The protein localises to the nucleus. The protein resides in the cytoplasm. Transcription factor that is involved in the regulation of cell proliferation, apoptosis and embryonic development. Plays an important role in the development of several organs, including kidney, muscle and inner ear. Depending on context, functions as a transcriptional repressor or activator. Lacks an activation domain, and requires interaction with EYA family members for transcription activation. Mediates nuclear translocation of EYA1 and EYA2. Binds the 5'-TCA[AG][AG]TTNC-3' motif present in the MEF3 element in the MYOG promoter and CIDEA enhancer. Regulates the expression of numerous genes, including MYC, CCNA1, CCND1 and EZR. Acts as an activator of the IGFBP5 promoter, probably coactivated by EYA2. Repression of precursor cell proliferation in myoblasts is switched to activation through recruitment of EYA3 to the SIX1-DACH1 complex. During myogenesis, seems to act together with EYA2 and DACH2. Regulates the expression of CCNA1. Promotes brown adipocyte differentiation. This chain is Homeobox protein SIX1 (Six1), found in Mus musculus (Mouse).